The primary structure comprises 460 residues: Nitrogenase iron-iron protein beta chain (460 aa).

Residues cysteine 20, cysteine 45, cysteine 104, and serine 143 each coordinate [8Fe-7S] cluster.

This sequence belongs to the NifD/NifK/NifE/NifN family. Hexamer of two alpha, two beta, and two delta chains. It depends on [8Fe-7S] cluster as a cofactor.

The catalysed reaction is N2 + 8 reduced [2Fe-2S]-[ferredoxin] + 16 ATP + 16 H2O = H2 + 8 oxidized [2Fe-2S]-[ferredoxin] + 2 NH4(+) + 16 ADP + 16 phosphate + 6 H(+). Functionally, this iron-iron protein is part of the nitrogenase complex that catalyzes the key enzymatic reactions in nitrogen fixation. Other nitrogenase complexes utilize a molybdenum-iron protein or a vanadium-iron protein. The sequence is that of Nitrogenase iron-iron protein beta chain (anfK) from Rhodobacter capsulatus (Rhodopseudomonas capsulata).